Consider the following 288-residue polypeptide: Acetyl-coenzyme A carboxylase carboxyl transferase subunit beta (288 aa).

Residues 34 to 288 enclose the CoA carboxyltransferase N-terminal domain; it reads LFAKCPACKH…HLVAFHGGVS (255 aa). 4 residues coordinate Zn(2+): cysteine 38, cysteine 41, cysteine 56, and cysteine 59. The C4-type zinc-finger motif lies at 38–59; the sequence is CPACKHMIYQKDLGPAKICPTC.

Belongs to the AccD/PCCB family. Acetyl-CoA carboxylase is a heterohexamer composed of biotin carboxyl carrier protein (AccB), biotin carboxylase (AccC) and two subunits each of ACCase subunit alpha (AccA) and ACCase subunit beta (AccD). Zn(2+) is required as a cofactor.

It is found in the cytoplasm. It catalyses the reaction N(6)-carboxybiotinyl-L-lysyl-[protein] + acetyl-CoA = N(6)-biotinyl-L-lysyl-[protein] + malonyl-CoA. The protein operates within lipid metabolism; malonyl-CoA biosynthesis; malonyl-CoA from acetyl-CoA: step 1/1. In terms of biological role, component of the acetyl coenzyme A carboxylase (ACC) complex. Biotin carboxylase (BC) catalyzes the carboxylation of biotin on its carrier protein (BCCP) and then the CO(2) group is transferred by the transcarboxylase to acetyl-CoA to form malonyl-CoA. The sequence is that of Acetyl-coenzyme A carboxylase carboxyl transferase subunit beta from Streptococcus equi subsp. zooepidemicus (strain MGCS10565).